The sequence spans 501 residues: Cobyric acid synthase (501 aa).

In terms of domain architecture, GATase cobBQ-type spans 253 to 450; it reads EIEIAVLKLP…LHGIFENGRW (198 aa). Catalysis depends on C334, which acts as the Nucleophile. The active site involves H442.

The protein belongs to the CobB/CobQ family. CobQ subfamily.

Its pathway is cofactor biosynthesis; adenosylcobalamin biosynthesis. In terms of biological role, catalyzes amidations at positions B, D, E, and G on adenosylcobyrinic A,C-diamide. NH(2) groups are provided by glutamine, and one molecule of ATP is hydrogenolyzed for each amidation. This Prochlorococcus marinus (strain MIT 9313) protein is Cobyric acid synthase.